Consider the following 440-residue polypeptide: Protein disulfide-isomerase A6 homolog (440 aa).

The N-terminal stretch at 1-18 is a signal peptide; the sequence is MALIKLLLASLAITSVCG. Thioredoxin domains follow at residues 19–131 and 127–273; these read MYSK…AEAK and LAEA…ARAQ. Active-site nucleophile residues include C54 and C57. The cysteines at positions 54 and 57 are disulfide-linked. Positions 138-164 are disordered; sequence LGGKSSGSSSSGSGSGSGKRGGGGSGN. Positions 139–149 are enriched in low complexity; sequence GGKSSGSSSSG. Positions 150–163 are enriched in gly residues; sequence SGSGSGKRGGGGSG. Residues C194 and C197 each act as nucleophile in the active site. C194 and C197 are joined by a disulfide. Positions 404–426 are disordered; the sequence is DGFPKIQKTEKWDGKDGALPAED. Over residues 410-419 the composition is skewed to basic and acidic residues; the sequence is QKTEKWDGKD. Residues 437-440 carry the Prevents secretion from ER motif; that stretch reads KTEL.

This sequence belongs to the protein disulfide isomerase family.

Its subcellular location is the endoplasmic reticulum lumen. The enzyme catalyses Catalyzes the rearrangement of -S-S- bonds in proteins.. Functionally, may function as a chaperone that inhibits aggregation of misfolded proteins. May negatively regulate the unfolded protein response (UPR) through binding to UPR sensors. The sequence is that of Protein disulfide-isomerase A6 homolog from Caenorhabditis elegans.